The sequence spans 298 residues: Protoheme IX farnesyltransferase (298 aa).

Helical transmembrane passes span 24 to 44 (VIQL…PGLP), 49 to 69 (LQLA…AAAF), 100 to 120 (LLFS…WVNP), 121 to 141 (LTMW…TVIL), 149 to 169 (IVIG…AMAG), 175 to 195 (ALIL…ALAL), 220 to 240 (LMVL…YVYG), 244 to 264 (WLYL…AFYL), and 277 to 297 (FRFS…DHYL).

The protein belongs to the UbiA prenyltransferase family. Protoheme IX farnesyltransferase subfamily.

The protein resides in the cell inner membrane. It carries out the reaction heme b + (2E,6E)-farnesyl diphosphate + H2O = Fe(II)-heme o + diphosphate. It participates in porphyrin-containing compound metabolism; heme O biosynthesis; heme O from protoheme: step 1/1. Converts heme B (protoheme IX) to heme O by substitution of the vinyl group on carbon 2 of heme B porphyrin ring with a hydroxyethyl farnesyl side group. This Albidiferax ferrireducens (strain ATCC BAA-621 / DSM 15236 / T118) (Rhodoferax ferrireducens) protein is Protoheme IX farnesyltransferase.